The sequence spans 304 residues: Ornithine carbamoyltransferase (304 aa).

Residues 53 to 56 (STRT), Gln80, Arg104, and 131 to 134 (HPCQ) each bind carbamoyl phosphate. Residues Asn162, Asp219, and 223 to 224 (SM) contribute to the L-ornithine site. Residues 259–260 (CL) and Arg287 each bind carbamoyl phosphate.

It belongs to the aspartate/ornithine carbamoyltransferase superfamily. OTCase family.

It localises to the cytoplasm. The catalysed reaction is carbamoyl phosphate + L-ornithine = L-citrulline + phosphate + H(+). It functions in the pathway amino-acid biosynthesis; L-arginine biosynthesis; L-arginine from L-ornithine and carbamoyl phosphate: step 1/3. Its function is as follows. Reversibly catalyzes the transfer of the carbamoyl group from carbamoyl phosphate (CP) to the N(epsilon) atom of ornithine (ORN) to produce L-citrulline. This is Ornithine carbamoyltransferase from Herminiimonas arsenicoxydans.